We begin with the raw amino-acid sequence, 113 residues long: Large ribosomal subunit protein bL19 (113 aa).

Belongs to the bacterial ribosomal protein bL19 family.

Functionally, this protein is located at the 30S-50S ribosomal subunit interface and may play a role in the structure and function of the aminoacyl-tRNA binding site. This is Large ribosomal subunit protein bL19 from Rhodococcus jostii (strain RHA1).